A 269-amino-acid polypeptide reads, in one-letter code: Phosphatidylglycerol--prolipoprotein diacylglyceryl transferase (269 aa).

The next 7 membrane-spanning stretches (helical) occupy residues 17 to 37, 56 to 76, 92 to 112, 120 to 140, 174 to 194, 202 to 222, and 237 to 257; these read LKIHWYGLMYLIGIGGAWLLA, LVFWLSMGVIVGGRLGYVLFY, WKGGMSFHGGFIGVMLAALWF, FFELMDFVAPLVPIGLGAGRI, PSQLYQFALEGVALFVILWLY, MAVSGMFALFYGIFRFIVEFV, and LTMGQLLCVPMIVGGIFLIWL. Arg-139 serves as a coordination point for a 1,2-diacyl-sn-glycero-3-phospho-(1'-sn-glycerol).

The protein belongs to the Lgt family.

The protein resides in the cell inner membrane. The enzyme catalyses L-cysteinyl-[prolipoprotein] + a 1,2-diacyl-sn-glycero-3-phospho-(1'-sn-glycerol) = an S-1,2-diacyl-sn-glyceryl-L-cysteinyl-[prolipoprotein] + sn-glycerol 1-phosphate + H(+). It functions in the pathway protein modification; lipoprotein biosynthesis (diacylglyceryl transfer). Catalyzes the transfer of the diacylglyceryl group from phosphatidylglycerol to the sulfhydryl group of the N-terminal cysteine of a prolipoprotein, the first step in the formation of mature lipoproteins. This Pseudomonas entomophila (strain L48) protein is Phosphatidylglycerol--prolipoprotein diacylglyceryl transferase.